The sequence spans 282 residues: Protein-export membrane protein SecF (282 aa).

The next 6 membrane-spanning stretches (helical) occupy residues 9-29 (IAIP…KGIP), 120-140 (EGFK…YLYF), 149-169 (IILS…LLGI), 174-194 (ATIA…ILLT), 214-234 (KTGL…LIVV), and 236-256 (LFIP…LALI).

Belongs to the SecD/SecF family. SecF subfamily. As to quaternary structure, part of the protein translocation apparatus. Forms a complex with SecD.

Its subcellular location is the cell membrane. In terms of biological role, involved in protein export. This chain is Protein-export membrane protein SecF, found in Methanocaldococcus jannaschii (strain ATCC 43067 / DSM 2661 / JAL-1 / JCM 10045 / NBRC 100440) (Methanococcus jannaschii).